The chain runs to 149 residues: Large ribosomal subunit protein uL13 (149 aa).

The protein belongs to the universal ribosomal protein uL13 family. As to quaternary structure, part of the 50S ribosomal subunit.

This protein is one of the early assembly proteins of the 50S ribosomal subunit, although it is not seen to bind rRNA by itself. It is important during the early stages of 50S assembly. This chain is Large ribosomal subunit protein uL13, found in Thermotoga maritima (strain ATCC 43589 / DSM 3109 / JCM 10099 / NBRC 100826 / MSB8).